An 800-amino-acid polypeptide reads, in one-letter code: Calmodulin-sensitive adenylate cyclase (800 aa).

The first 33 residues, 1–33 (MTRNKFIPNKFSIISFSVLLFAISSSQAIEVNA), serve as a signal peptide directing secretion. One can recognise an ATLF-like domain in the interval 60 to 273 (KDSINNLVKT…MFEYMNKLEK (214 aa)). The interval 294-349 (DVLKGEKALKASGLVPEHADAFKKIARELNTYILFRPVNKLATNLIKSGVATKGLN) is catalytic CA1. Residues 350 to 489 (VHGKSSDWGP…NVEGVLKPLT (140 aa)) are catalytic CB. Catalysis depends on His-351, which acts as the Proton acceptor. The interval 490–622 (ADYDLFALAP…RFIEKNITGK (133 aa)) is catalytic CA2. Residues Asp-491 and Asp-493 each coordinate Mg(2+). Residues Thr-548 and 577–579 (HGT) contribute to the 3',5'-cyclic AMP site. Residue His-577 participates in Mg(2+) binding. Residues 623–800 (DYLYYFNRSY…EVFQKIIDEK (178 aa)) form an interaction with calmodulin region.

Belongs to the adenylyl cyclase class-2 family. Interacts (via ATLF domain) with the cleaved form of protective antigen (PA-63) anthrax toxin; interaction is required for EF translocation into the host cytoplasm. It depends on Ca(2+) as a cofactor.

Its subcellular location is the secreted. The protein localises to the host cytoplasm. It is found in the host cytosol. It catalyses the reaction ATP = 3',5'-cyclic AMP + diphosphate. Host calmodulin is an absolute requirement for its activation. Inhibited by ethyl 5-aminopyrazolo[1,5-a]quinazoline-3-carboxylate. In terms of biological role, edema factor (EF), which constitutes one of the three proteins composing the anthrax toxin, causes edema in the host. Acts as a calmodulin-dependent adenylyl cyclase by converting ATP to cAMP, leading to dramatic elevation of intracellular cAMP levels in the host, thereby causing edema. EF is not toxic by itself and only acts as an edema factor when associated with protective antigen (PA) to form the edema toxin (EdTx). Required for the survival of germinated spores within macrophages at the early stages of infection. The protein is Calmodulin-sensitive adenylate cyclase (cya) of Bacillus anthracis.